The chain runs to 168 residues: uncharacterized protein (168 aa).

The helical transmembrane segment at 23-47 (LFARASIIGVALLLSACATVPMASV) threads the bilayer.

Its subcellular location is the membrane. This is an uncharacterized protein from Haemophilus influenzae (strain ATCC 51907 / DSM 11121 / KW20 / Rd).